The following is a 201-amino-acid chain: Putative manganese efflux pump MntP (201 aa).

Helical transmembrane passes span 3–23, 39–59, 65–85, 116–136, 141–161, and 176–196; these read LVSI…VSIT, IGLF…SIGI, IAAL…GKMI, LTLL…SFAF, IINT…IGVM, and ILGG…HTNI.

Belongs to the MntP (TC 9.B.29) family.

Its subcellular location is the cell membrane. In terms of biological role, probably functions as a manganese efflux pump. In Clostridium botulinum (strain Loch Maree / Type A3), this protein is Putative manganese efflux pump MntP.